Reading from the N-terminus, the 165-residue chain is MSLPDKAFPVSWDQFHRDARALAWRIAGMNRDWHAIVAITRGGLVPAAIVCRELGIRLIETVCIASYHDYTSQGDMQILKGVSETLLENGGEGVIVVDDLTDTGKTAAIVREMMPKAHFATVYAKPKGRPLIDTFVTEVSQDTWIYFPWDMGFTYQEPIAGDKRG.

Residues 41–42 and 98–106 contribute to the 5-phospho-alpha-D-ribose 1-diphosphate site; these read RG and DDLTDTGKT. Residue Asp-99 coordinates Mg(2+). The guanine site is built by Asp-102 and Ile-145. Xanthine is bound by residues Asp-102 and Ile-145. GMP contacts are provided by residues 102-106 and 144-145; these read DTGKT and WI.

It belongs to the purine/pyrimidine phosphoribosyltransferase family. XGPT subfamily. In terms of assembly, homotetramer. Mg(2+) serves as cofactor.

The protein localises to the cell inner membrane. The enzyme catalyses GMP + diphosphate = guanine + 5-phospho-alpha-D-ribose 1-diphosphate. It carries out the reaction XMP + diphosphate = xanthine + 5-phospho-alpha-D-ribose 1-diphosphate. The catalysed reaction is IMP + diphosphate = hypoxanthine + 5-phospho-alpha-D-ribose 1-diphosphate. It functions in the pathway purine metabolism; GMP biosynthesis via salvage pathway; GMP from guanine: step 1/1. The protein operates within purine metabolism; XMP biosynthesis via salvage pathway; XMP from xanthine: step 1/1. Functionally, purine salvage pathway enzyme that catalyzes the transfer of the ribosyl-5-phosphate group from 5-phospho-alpha-D-ribose 1-diphosphate (PRPP) to the N9 position of the 6-oxopurines guanine and xanthine to form the corresponding ribonucleotides GMP (guanosine 5'-monophosphate) and XMP (xanthosine 5'-monophosphate), with the release of PPi. To a lesser extent, also acts on hypoxanthine. The chain is Xanthine-guanine phosphoribosyltransferase from Brucella anthropi (strain ATCC 49188 / DSM 6882 / CCUG 24695 / JCM 21032 / LMG 3331 / NBRC 15819 / NCTC 12168 / Alc 37) (Ochrobactrum anthropi).